The following is a 269-amino-acid chain: Histidinol-phosphatase (269 aa).

This sequence belongs to the PHP hydrolase family. HisK subfamily.

It carries out the reaction L-histidinol phosphate + H2O = L-histidinol + phosphate. Its pathway is amino-acid biosynthesis; L-histidine biosynthesis; L-histidine from 5-phospho-alpha-D-ribose 1-diphosphate: step 8/9. This Lactococcus lactis subsp. lactis (strain IL1403) (Streptococcus lactis) protein is Histidinol-phosphatase (hisK).